The following is a 156-amino-acid chain: ATP synthase subunit b (156 aa).

Residues 11–31 (AIAFVIFVWFCMKYVWPPLMA) traverse the membrane as a helical segment.

The protein belongs to the ATPase B chain family. As to quaternary structure, F-type ATPases have 2 components, F(1) - the catalytic core - and F(0) - the membrane proton channel. F(1) has five subunits: alpha(3), beta(3), gamma(1), delta(1), epsilon(1). F(0) has three main subunits: a(1), b(2) and c(10-14). The alpha and beta chains form an alternating ring which encloses part of the gamma chain. F(1) is attached to F(0) by a central stalk formed by the gamma and epsilon chains, while a peripheral stalk is formed by the delta and b chains.

The protein resides in the cell inner membrane. Its function is as follows. F(1)F(0) ATP synthase produces ATP from ADP in the presence of a proton or sodium gradient. F-type ATPases consist of two structural domains, F(1) containing the extramembraneous catalytic core and F(0) containing the membrane proton channel, linked together by a central stalk and a peripheral stalk. During catalysis, ATP synthesis in the catalytic domain of F(1) is coupled via a rotary mechanism of the central stalk subunits to proton translocation. In terms of biological role, component of the F(0) channel, it forms part of the peripheral stalk, linking F(1) to F(0). This chain is ATP synthase subunit b, found in Klebsiella pneumoniae (strain 342).